The primary structure comprises 327 residues: tRNA pseudouridine synthase B (327 aa).

Residue Asp-83 is the Nucleophile of the active site.

The protein belongs to the pseudouridine synthase TruB family. Type 1 subfamily.

It catalyses the reaction uridine(55) in tRNA = pseudouridine(55) in tRNA. Its function is as follows. Responsible for synthesis of pseudouridine from uracil-55 in the psi GC loop of transfer RNAs. This Mesomycoplasma hyopneumoniae (strain 232) (Mycoplasma hyopneumoniae) protein is tRNA pseudouridine synthase B.